The primary structure comprises 256 residues: Protein FixA (256 aa).

The protein belongs to the ETF beta-subunit/FixA family. In terms of assembly, heterodimer of FixA and FixB.

It functions in the pathway amine and polyamine metabolism; carnitine metabolism. Required for anaerobic carnitine reduction. May bring reductant to CaiA. This is Protein FixA from Escherichia fergusonii (strain ATCC 35469 / DSM 13698 / CCUG 18766 / IAM 14443 / JCM 21226 / LMG 7866 / NBRC 102419 / NCTC 12128 / CDC 0568-73).